The chain runs to 278 residues: Biotin synthase (278 aa).

The region spanning 1–227 (MQIMLCAISN…QSVVMVAGGR (227 aa)) is the Radical SAM core domain. [4Fe-4S] cluster-binding residues include cysteine 16, cysteine 20, and cysteine 23. [2Fe-2S] cluster is bound by residues cysteine 60, cysteine 95, and cysteine 153.

This sequence belongs to the radical SAM superfamily. Biotin synthase family. Homodimer. [4Fe-4S] cluster is required as a cofactor. Requires [2Fe-2S] cluster as cofactor.

The enzyme catalyses (4R,5S)-dethiobiotin + (sulfur carrier)-SH + 2 reduced [2Fe-2S]-[ferredoxin] + 2 S-adenosyl-L-methionine = (sulfur carrier)-H + biotin + 2 5'-deoxyadenosine + 2 L-methionine + 2 oxidized [2Fe-2S]-[ferredoxin]. It functions in the pathway cofactor biosynthesis; biotin biosynthesis; biotin from 7,8-diaminononanoate: step 2/2. Catalyzes the conversion of dethiobiotin (DTB) to biotin by the insertion of a sulfur atom into dethiobiotin via a radical-based mechanism. This Campylobacter jejuni subsp. doylei (strain ATCC BAA-1458 / RM4099 / 269.97) protein is Biotin synthase.